Here is a 743-residue protein sequence, read N- to C-terminus: Catalase-peroxidase (743 aa).

The interval 1–22 is disordered; the sequence is MEKQSNDAAVAGAPNDHGAAKC. The segment at residues 105-227 is a cross-link (tryptophyl-tyrosyl-methioninium (Trp-Tyr) (with M-253)); sequence WHSAGTYRIT…LGAVQMGLIY (123 aa). Histidine 106 functions as the Proton acceptor in the catalytic mechanism. Positions 227–253 form a cross-link, tryptophyl-tyrosyl-methioninium (Tyr-Met) (with W-105); sequence YVNPEGPNGNPDPVAAAKDIRETFFRM. A heme b-binding site is contributed by histidine 268.

The protein belongs to the peroxidase family. Peroxidase/catalase subfamily. Homodimer or homotetramer. Requires heme b as cofactor. Post-translationally, formation of the three residue Trp-Tyr-Met cross-link is important for the catalase, but not the peroxidase activity of the enzyme.

It catalyses the reaction H2O2 + AH2 = A + 2 H2O. It carries out the reaction 2 H2O2 = O2 + 2 H2O. Its function is as follows. Bifunctional enzyme with both catalase and broad-spectrum peroxidase activity. In Solibacter usitatus (strain Ellin6076), this protein is Catalase-peroxidase.